Here is a 339-residue protein sequence, read N- to C-terminus: Bifunctional protein GlmU (339 aa).

The tract at residues 1 to 234 (MKKENPLAIV…PKDVLGVNSR (234 aa)) is pyrophosphorylase. UDP-N-acetyl-alpha-D-glucosamine is bound by residues 12–15 (LAAG), K26, Q77, and 82–83 (GT). D107 is a binding site for Mg(2+). Residues G144, E159, N174, and N232 each contribute to the UDP-N-acetyl-alpha-D-glucosamine site. N232 is a Mg(2+) binding site. The segment at 235-255 (IELAMADEELRMRRNREVMLT) is linker. Residues 256–339 (GVSMILPATI…KIPAQQREEE (84 aa)) are N-acetyltransferase.

It belongs to the N-acetylglucosamine-1-phosphate uridyltransferase family. As to quaternary structure, homotrimer. Mg(2+) is required as a cofactor.

Its subcellular location is the cytoplasm. It catalyses the reaction alpha-D-glucosamine 1-phosphate + acetyl-CoA = N-acetyl-alpha-D-glucosamine 1-phosphate + CoA + H(+). The catalysed reaction is N-acetyl-alpha-D-glucosamine 1-phosphate + UTP + H(+) = UDP-N-acetyl-alpha-D-glucosamine + diphosphate. It functions in the pathway nucleotide-sugar biosynthesis; UDP-N-acetyl-alpha-D-glucosamine biosynthesis; N-acetyl-alpha-D-glucosamine 1-phosphate from alpha-D-glucosamine 6-phosphate (route II): step 2/2. Its pathway is nucleotide-sugar biosynthesis; UDP-N-acetyl-alpha-D-glucosamine biosynthesis; UDP-N-acetyl-alpha-D-glucosamine from N-acetyl-alpha-D-glucosamine 1-phosphate: step 1/1. The protein operates within bacterial outer membrane biogenesis; LPS lipid A biosynthesis. Its function is as follows. Catalyzes the last two sequential reactions in the de novo biosynthetic pathway for UDP-N-acetylglucosamine (UDP-GlcNAc). The C-terminal domain catalyzes the transfer of acetyl group from acetyl coenzyme A to glucosamine-1-phosphate (GlcN-1-P) to produce N-acetylglucosamine-1-phosphate (GlcNAc-1-P), which is converted into UDP-GlcNAc by the transfer of uridine 5-monophosphate (from uridine 5-triphosphate), a reaction catalyzed by the N-terminal domain. This is Bifunctional protein GlmU (glmU) from Desulfotalea psychrophila (strain LSv54 / DSM 12343).